Reading from the N-terminus, the 511-residue chain is GATOR complex protein NPRL3 (511 aa).

Positions 37-58 (KPATKAPSKDPQPSSSNPGQCV) are disordered.

This sequence belongs to the NPR3 family. As to quaternary structure, probably part of the GATOR complex.

The protein localises to the lysosome membrane. Functionally, as a component of the GATOR complex may function in the amino acid-sensing branch of the TORC1 signaling pathway. This Caenorhabditis elegans protein is GATOR complex protein NPRL3 (nprl-3).